Consider the following 386-residue polypeptide: Alkanesulfonate monooxygenase (386 aa).

It belongs to the SsuD family.

It carries out the reaction an alkanesulfonate + FMNH2 + O2 = an aldehyde + FMN + sulfite + H2O + 2 H(+). In terms of biological role, catalyzes the desulfonation of aliphatic sulfonates. In Paraburkholderia phytofirmans (strain DSM 17436 / LMG 22146 / PsJN) (Burkholderia phytofirmans), this protein is Alkanesulfonate monooxygenase.